An 87-amino-acid polypeptide reads, in one-letter code: Kappa-6-bungarotoxin (87 aa).

A signal peptide spans 1 to 21 (MKTLLLSLVVVTIVCLDLGYT). Cystine bridges form between Cys-24-Cys-42, Cys-35-Cys-63, Cys-48-Cys-52, Cys-67-Cys-79, and Cys-80-Cys-85.

This sequence belongs to the three-finger toxin family. Long-chain subfamily. Kappa-neurotoxin sub-subfamily. Homo- and heterodimer; non-covalently linked. In terms of tissue distribution, expressed by the venom gland.

It is found in the secreted. Its function is as follows. Postsynaptic neurotoxin that binds and inhibits neuronal nicotinic acetylcholine receptors (nAChR) with high affinity (IC(50)&lt;100 nM). Is a selective, and slowly reversible antagonist of alpha-3/CHRNA3-containing and some alpha-4/CHRNA4-containing AChRs. This chain is Kappa-6-bungarotoxin, found in Bungarus multicinctus (Many-banded krait).